A 290-amino-acid polypeptide reads, in one-letter code: Syntaxin-1A (290 aa).

The disordered stretch occupies residues 1 to 21; sequence MTKDRLAALQAAQSDDEDMPE. The Cytoplasmic segment spans residues 1–267; that stretch reads MTKDRLAALQ…KYQSKARRKK (267 aa). In terms of domain architecture, t-SNARE coiled-coil homology spans 194–256; the sequence is LADIEARHAD…QTATQDTKKA (63 aa). The helical; Anchor for type IV membrane protein transmembrane segment at 268-289 threads the bilayer; the sequence is IWIAICVLIAIIILVVFLAIYL. Residue threonine 290 is a topological domain, vesicular.

The protein belongs to the syntaxin family. Post-translationally, (Microbial infection) Targeted and hydrolyzed by the light chain (LC) of P.bifermentans PMP1. Cleavage probably inhibits neurotransmitter release.

It localises to the cytoplasmic vesicle. The protein resides in the secretory vesicle. It is found in the synaptic vesicle membrane. In terms of biological role, plays a critical role in several secretory processes. This is Syntaxin-1A from Anopheles gambiae (African malaria mosquito).